Consider the following 516-residue polypeptide: ADP-ribosylation factor GTPase-activating protein 3 (516 aa).

The region spanning 10–126 (LTIFKRLRSV…IKSLASQATR (117 aa)) is the Arf-GAP domain. The segment at 25 to 48 (CFDCGAKNPSWASITYGVFLCIDC) adopts a C4-type zinc-finger fold. The disordered stretch occupies residues 170–199 (AEPSSLTSRPVETTLENNEGGQEQGPSVEG). A compositionally biased stretch (polar residues) spans 173-194 (SSLTSRPVETTLENNEGGQEQG). The residue at position 231 (Ser-231) is a Phosphoserine. The stretch at 243–264 (NEIEKQAQAADKMKEQEDLAKA) forms a coiled coil. Phosphoserine is present on residues Ser-270, Ser-274, Ser-331, and Ser-370. Residues 392 to 414 (KTTGYSDRPTARRKPDYEPVENT) form a disordered region. A phosphoserine mark is found at Ser-428, Ser-451, Ser-453, Ser-455, Ser-457, and Ser-458.

It is found in the cytoplasm. The protein resides in the golgi apparatus membrane. GAP activity stimulated by phosphatidylinositol 4,5-bisphosphate (PIP2). Functionally, GTPase-activating protein (GAP) for ADP ribosylation factor 1 (ARF1). Hydrolysis of ARF1-bound GTP may lead to dissociation of coatomer from Golgi-derived membranes to allow fusion with target membranes. The sequence is that of ADP-ribosylation factor GTPase-activating protein 3 from Macaca fascicularis (Crab-eating macaque).